The sequence spans 749 residues: MKKKSLTELISDLKGNENVVNWHEIEPREAKTRPMPESIDERIKAALSKRGIDELYTHQYSAFQYVQKGESIVTVTPTASGKTLCYNLPVLQSIAQDETNRALYLFPTKALAQDQKSELNEIIDEMGIDIKSFTYDGDTSPAIRQKVRKAGHIVITNPDMLHSAILPHHTKWVSLFENLKYIVIDELHTYRGVFGSHVANVIRRLKRICRFYGSDPVFICTSATIANPKELGEQLTGKPMRLVDDNGAPSGRKHFVFYNPPIVNKPLNIRRSATAEVNELAKEFLKNKVQTIVFARSRVRVEIILSHIQELVKKEIGTKSIRGYRGGYLPKERREIERGLREGDILGVVSTNALELGVDIGQLQVCVMTGYPGSVASAWQQAGRAGRRHGESLIIMVANSTPIDQYIVRHPEYFFNRSPESARINPENLIILVDHLKCAAYELPFRADEEFGAMEVSDILEYLQEEAVLHRNGERYHWASESFPASNISLRSASQENVVIVDQSDIANVRIIGEMDRFSAMTLLHDEAIYLHEGVQYQVEKLDWDHKKAYVRKVDVEYYTDANLAVQLKVLEIDKTKEKSRTSLHYGDVTVNALPTIFKKIKMTTFENIGSGPIHLPEEELHTSAAWLEIKTADEDIGEKTLEQLLLGISNVLQHIVPVYIMCDRNDVHVVSQIKAAHTGLPTIFLYDHYPGGIGLAEEVFKRFSDINEAAKQLITHCPCHDGCPSCIGTEIEGIKAKERILQLLDQMS.

One can recognise a Helicase ATP-binding domain in the interval 63–243 (FQYVQKGESI…QLTGKPMRLV (181 aa)). ATP is bound at residue 76–83 (TPTASGKT). The DEVH box signature appears at 185–188 (DELH). The Helicase C-terminal domain occupies 276–430 (EVNELAKEFL…SARINPENLI (155 aa)).

The protein belongs to the helicase family.

This is an uncharacterized protein from Bacillus subtilis (strain 168).